Here is a 183-residue protein sequence, read N- to C-terminus: Ribosome rescue factor SmrB (183 aa).

One can recognise a Smr domain in the interval 98–173 (LDLHGLTQLQ…GDAALLVLIE (76 aa)).

This sequence belongs to the SmrB family. In terms of assembly, associates with collided ribosomes, but not with correctly translating polysomes.

In terms of biological role, acts as a ribosome collision sensor. Detects stalled/collided disomes (pairs of ribosomes where the leading ribosome is stalled and a second ribosome has collided with it) and endonucleolytically cleaves mRNA at the 5' boundary of the stalled ribosome. Stalled/collided disomes form a new interface (primarily via the 30S subunits) that binds SmrB. Cleaved mRNA becomes available for tmRNA ligation, leading to ribosomal subunit dissociation and rescue of stalled ribosomes. This Escherichia coli O7:K1 (strain IAI39 / ExPEC) protein is Ribosome rescue factor SmrB.